The primary structure comprises 136 residues: Large ribosomal subunit protein uL16 (136 aa).

Belongs to the universal ribosomal protein uL16 family. As to quaternary structure, part of the 50S ribosomal subunit.

Functionally, binds 23S rRNA and is also seen to make contacts with the A and possibly P site tRNAs. The sequence is that of Large ribosomal subunit protein uL16 from Actinobacillus pleuropneumoniae serotype 5b (strain L20).